We begin with the raw amino-acid sequence, 474 residues long: L-arabinose isomerase (474 aa).

The Mn(2+) site is built by glutamate 306, glutamate 331, histidine 348, and histidine 447.

It belongs to the arabinose isomerase family. Mn(2+) is required as a cofactor.

The catalysed reaction is beta-L-arabinopyranose = L-ribulose. It participates in carbohydrate degradation; L-arabinose degradation via L-ribulose; D-xylulose 5-phosphate from L-arabinose (bacterial route): step 1/3. In terms of biological role, catalyzes the conversion of L-arabinose to L-ribulose. This Leuconostoc mesenteroides subsp. mesenteroides (strain ATCC 8293 / DSM 20343 / BCRC 11652 / CCM 1803 / JCM 6124 / NCDO 523 / NBRC 100496 / NCIMB 8023 / NCTC 12954 / NRRL B-1118 / 37Y) protein is L-arabinose isomerase.